We begin with the raw amino-acid sequence, 245 residues long: 1-(5-phosphoribosyl)-5-[(5-phosphoribosylamino)methylideneamino] imidazole-4-carboxamide isomerase (245 aa).

The active-site Proton acceptor is Asp-7. Asp-129 functions as the Proton donor in the catalytic mechanism.

This sequence belongs to the HisA/HisF family.

The protein resides in the cytoplasm. The catalysed reaction is 1-(5-phospho-beta-D-ribosyl)-5-[(5-phospho-beta-D-ribosylamino)methylideneamino]imidazole-4-carboxamide = 5-[(5-phospho-1-deoxy-D-ribulos-1-ylimino)methylamino]-1-(5-phospho-beta-D-ribosyl)imidazole-4-carboxamide. The protein operates within amino-acid biosynthesis; L-histidine biosynthesis; L-histidine from 5-phospho-alpha-D-ribose 1-diphosphate: step 4/9. The chain is 1-(5-phosphoribosyl)-5-[(5-phosphoribosylamino)methylideneamino] imidazole-4-carboxamide isomerase from Shigella boydii serotype 18 (strain CDC 3083-94 / BS512).